The sequence spans 303 residues: Diaminopimelate epimerase (303 aa).

Substrate contacts are provided by Asn-15, Gln-47, and Asn-67. Residue Cys-76 is the Proton donor of the active site. Substrate-binding positions include 77-78 (GN), Asn-163, Asn-197, and 215-216 (ER). Cys-224 serves as the catalytic Proton acceptor. 225-226 (GS) contacts substrate.

This sequence belongs to the diaminopimelate epimerase family. In terms of assembly, homodimer.

It localises to the cytoplasm. The enzyme catalyses (2S,6S)-2,6-diaminopimelate = meso-2,6-diaminopimelate. It participates in amino-acid biosynthesis; L-lysine biosynthesis via DAP pathway; DL-2,6-diaminopimelate from LL-2,6-diaminopimelate: step 1/1. Catalyzes the stereoinversion of LL-2,6-diaminopimelate (L,L-DAP) to meso-diaminopimelate (meso-DAP), a precursor of L-lysine and an essential component of the bacterial peptidoglycan. The protein is Diaminopimelate epimerase of Allorhizobium ampelinum (strain ATCC BAA-846 / DSM 112012 / S4) (Agrobacterium vitis (strain S4)).